Consider the following 525-residue polypeptide: Vesicular inhibitory amino acid transporter (525 aa).

Residues 1–132 (MATLLRSKLS…WNVTNAIQGM (132 aa)) lie on the Cytoplasmic side of the membrane. Positions 83 to 107 (IHYQRGSGAPLPPSGSKDQVGGGGE) are disordered. A helical transmembrane segment spans residues 133–153 (FVLGLPYAILHGGYLGLFLII). Residues 154 to 204 (FAAVVCCYTGKILIACLYEENEDGEVVRVRDSYVAIANACCAPRFPTLGGR) lie on the Lumenal, vesicle side of the membrane. The residue at position 186 (Tyr186) is a 3'-nitrotyrosine. Residues 205–225 (VVNVAQIIELVMTCILYVVVS) traverse the membrane as a helical segment. The Cytoplasmic portion of the chain corresponds to 226–265 (GNLMYNSFPGLPVSQKSWSIIATAVLLPCAFLKNLKAVSK). A helical membrane pass occupies residues 266–286 (FSLLCTLAHFVINILVIAYCL). The Lumenal, vesicle portion of the chain corresponds to 287–305 (SRARDWAWEKVKFYIDVKK). The helical transmembrane segment at 306 to 326 (FPISIGIIVFSYTSQIFLPSL) threads the bilayer. Over 327–341 (EGNMQQPSEFHCMMN) the chain is Cytoplasmic. The chain crosses the membrane as a helical span at residues 342 to 362 (WTHIAACVLKGLFALVAYLTW). Over 363 to 383 (ADETKEVITDNLPGSIRAVVN) the chain is Lumenal, vesicle. The chain crosses the membrane as a helical span at residues 384 to 404 (IFLVAKALLSYPLPFFAAVEV). Residues 405-438 (LEKSLFQEGSRAFFPACYSGDGRLKSWGLTLRCA) are Cytoplasmic-facing. Residues 439–459 (LVVFTLLMAIYVPHFALLMGL) traverse the membrane as a helical segment. At 460 to 461 (TG) the chain is on the lumenal, vesicle side. Residues 462–482 (SLTGAGLCFLLPSLFHLRLLW) traverse the membrane as a helical segment. The Cytoplasmic portion of the chain corresponds to 483-489 (RKLLWHQ). Residues 490–510 (VFFDVAIFVIGGICSVSGFVH) form a helical membrane-spanning segment. At 511–525 (SLEGLIEAYRTNAED) the chain is on the lumenal, vesicle side.

It belongs to the amino acid/polyamine transporter 2 family. In terms of tissue distribution, retina. Expressed throughout the horizontal cells or more specifically at the terminals.

Its subcellular location is the cytoplasmic vesicle membrane. It localises to the presynapse. The catalysed reaction is 4-aminobutanoate(out) + n H(+)(in) = 4-aminobutanoate(in) + n H(+)(out). It catalyses the reaction glycine(out) + n H(+)(in) = glycine(in) + n H(+)(out). The enzyme catalyses beta-alanine(out) + n H(+)(in) = beta-alanine(in) + n H(+)(out). Its function is as follows. Antiporter that exchanges vesicular protons for cytosolic 4-aminobutanoate or to a lesser extend glycine, thus allowing their secretion from nerve terminals. The transport is equally dependent on the chemical and electrical components of the proton gradient. May also transport beta-alanine. Acidification of GABAergic synaptic vesicles is a prerequisite for 4-aminobutanoate uptake. The sequence is that of Vesicular inhibitory amino acid transporter from Homo sapiens (Human).